A 345-amino-acid polypeptide reads, in one-letter code: Small ribosomal subunit biogenesis GTPase RsgA (345 aa).

The segment at 1 to 36 (MSKNKLSKGQERRVQANHQRRLQQRERGAAHWDDQP) is disordered. Residues 23–34 (QQRERGAAHWDD) are compositionally biased toward basic and acidic residues. The 171-residue stretch at 103–273 (RSVLTRPDVY…LIDSPGVREL (171 aa)) folds into the CP-type G domain. GTP contacts are provided by residues 159–162 (NKID) and 213–221 (GQSGVGKSS). Cys297, Cys302, His304, and Cys310 together coordinate Zn(2+).

It belongs to the TRAFAC class YlqF/YawG GTPase family. RsgA subfamily. Monomer. Associates with 30S ribosomal subunit, binds 16S rRNA. The cofactor is Zn(2+).

The protein localises to the cytoplasm. Functionally, one of several proteins that assist in the late maturation steps of the functional core of the 30S ribosomal subunit. Helps release RbfA from mature subunits. May play a role in the assembly of ribosomal proteins into the subunit. Circularly permuted GTPase that catalyzes slow GTP hydrolysis, GTPase activity is stimulated by the 30S ribosomal subunit. The polypeptide is Small ribosomal subunit biogenesis GTPase RsgA (Sodalis glossinidius (strain morsitans)).